A 414-amino-acid chain; its full sequence is Peptide chain release factor subunit 1 (414 aa).

This sequence belongs to the eukaryotic release factor 1 family. Heterodimer of two subunits, one of which binds GTP.

The protein localises to the cytoplasm. Directs the termination of nascent peptide synthesis (translation) in response to the termination codons UAA, UAG and UGA. The polypeptide is Peptide chain release factor subunit 1 (Methanococcoides burtonii (strain DSM 6242 / NBRC 107633 / OCM 468 / ACE-M)).